Consider the following 191-residue polypeptide: Protein GrpE (191 aa).

Composition is skewed to basic and acidic residues over residues 1-19 (MKDE…EPES) and 29-45 (QQGE…GEIK). The interval 1-45 (MKDEHNQEHDHLSPKEPESYQKAYACKEQQGEEKQEASEKEGEIK) is disordered.

Belongs to the GrpE family. In terms of assembly, homodimer.

It is found in the cytoplasm. Participates actively in the response to hyperosmotic and heat shock by preventing the aggregation of stress-denatured proteins, in association with DnaK and GrpE. It is the nucleotide exchange factor for DnaK and may function as a thermosensor. Unfolded proteins bind initially to DnaJ; upon interaction with the DnaJ-bound protein, DnaK hydrolyzes its bound ATP, resulting in the formation of a stable complex. GrpE releases ADP from DnaK; ATP binding to DnaK triggers the release of the substrate protein, thus completing the reaction cycle. Several rounds of ATP-dependent interactions between DnaJ, DnaK and GrpE are required for fully efficient folding. In Helicobacter pylori (strain J99 / ATCC 700824) (Campylobacter pylori J99), this protein is Protein GrpE.